The primary structure comprises 83 residues: MAVKLIRCPSCGEEIEITDLYEGVEIQCSLCNSIMVYQEGKLLLLDTNEEFDLDELESVEEEEEFEDYDEFEEEEEYYYDDEY.

Positions 57-83 (ESVEEEEEFEDYDEFEEEEEYYYDDEY) are disordered.

This is an uncharacterized protein from Archaeoglobus fulgidus (strain ATCC 49558 / DSM 4304 / JCM 9628 / NBRC 100126 / VC-16).